We begin with the raw amino-acid sequence, 138 residues long: ATP synthase epsilon chain (138 aa).

This sequence belongs to the ATPase epsilon chain family. As to quaternary structure, F-type ATPases have 2 components, CF(1) - the catalytic core - and CF(0) - the membrane proton channel. CF(1) has five subunits: alpha(3), beta(3), gamma(1), delta(1), epsilon(1). CF(0) has three main subunits: a, b and c.

It localises to the cell inner membrane. In terms of biological role, produces ATP from ADP in the presence of a proton gradient across the membrane. In Geotalea uraniireducens (strain Rf4) (Geobacter uraniireducens), this protein is ATP synthase epsilon chain.